The sequence spans 70 residues: MAGRLVILVLRAYQRFVSPLFPPSCRFTPSCSQYAVEAVERYGPLKGGAMAAWRVLRCHPFSRGGVDPVR.

This sequence belongs to the UPF0161 family.

Its subcellular location is the cell membrane. Could be involved in insertion of integral membrane proteins into the membrane. The polypeptide is Putative membrane protein insertion efficiency factor (Rubrobacter xylanophilus (strain DSM 9941 / JCM 11954 / NBRC 16129 / PRD-1)).